A 188-amino-acid chain; its full sequence is Probable chorismate pyruvate-lyase (188 aa).

Arg90, Leu128, and Glu175 together coordinate substrate.

It belongs to the UbiC family.

The protein resides in the cytoplasm. It carries out the reaction chorismate = 4-hydroxybenzoate + pyruvate. Its pathway is cofactor biosynthesis; ubiquinone biosynthesis. Functionally, removes the pyruvyl group from chorismate, with concomitant aromatization of the ring, to provide 4-hydroxybenzoate (4HB) for the ubiquinone pathway. The chain is Probable chorismate pyruvate-lyase from Marinobacter nauticus (strain ATCC 700491 / DSM 11845 / VT8) (Marinobacter aquaeolei).